The primary structure comprises 413 residues: Coiled-coil domain-containing protein 83 (413 aa).

2 coiled-coil regions span residues 32-186 (HCQI…RIIR) and 215-255 (IWEN…QLFN).

In Bos taurus (Bovine), this protein is Coiled-coil domain-containing protein 83 (CCDC83).